The sequence spans 58 residues: Large ribosomal subunit protein uL30 (58 aa).

Belongs to the universal ribosomal protein uL30 family. In terms of assembly, part of the 50S ribosomal subunit.

This chain is Large ribosomal subunit protein uL30, found in Novosphingobium aromaticivorans (strain ATCC 700278 / DSM 12444 / CCUG 56034 / CIP 105152 / NBRC 16084 / F199).